We begin with the raw amino-acid sequence, 558 residues long: Formate--tetrahydrofolate ligase (558 aa).

66–73 (TPAGEGKT) lines the ATP pocket.

Belongs to the formate--tetrahydrofolate ligase family.

The catalysed reaction is (6S)-5,6,7,8-tetrahydrofolate + formate + ATP = (6R)-10-formyltetrahydrofolate + ADP + phosphate. The protein operates within one-carbon metabolism; tetrahydrofolate interconversion. The sequence is that of Formate--tetrahydrofolate ligase from Neisseria meningitidis serogroup A / serotype 4A (strain DSM 15465 / Z2491).